The following is an 89-amino-acid chain: Omega-theraphotoxin-Ba1c (89 aa).

An N-terminal signal peptide occupies residues Met1–Ala23. Residues Glu24–Arg50 constitute a propeptide that is removed on maturation. 3 disulfides stabilise this stretch: Cys54–Cys75, Cys58–Cys81, and Cys67–Cys86.

The protein belongs to the neurotoxin 12 (Hwtx-2) family. 06 (TXP1) subfamily. As to expression, expressed by the venom gland.

It localises to the secreted. Inhibits voltage-gated calcium channels (Cav) in rat cerebellar granule cells. Has insecticidal activity. In Brachypelma albiceps (Mexican golden redrump tarantula), this protein is Omega-theraphotoxin-Ba1c.